Here is a 284-residue protein sequence, read N- to C-terminus: Hypersensitive-induced response protein 1 (284 aa).

Gly2 carries N-myristoyl glycine lipidation.

As to quaternary structure, interacts with LRR1.

The protein localises to the cell membrane. Positive regulator of hypersensitive response (HR)-like cell death. May be involved in potassium ion channel regulation. The chain is Hypersensitive-induced response protein 1 from Oryza sativa subsp. japonica (Rice).